Here is a 641-residue protein sequence, read N- to C-terminus: XK-related protein 6 (641 aa).

Disordered regions lie at residues 20-47 (LDEA…DGSE) and 84-120 (RSAA…PPPP). Over residues 34–46 (PGGGGCGGGGDGS) the composition is skewed to gly residues. Residues 107–120 (PPTPSAARPEPPPP) show a composition bias toward pro residues. Helical transmembrane passes span 130–150 (LWIV…LWLA), 159–179 (YVYF…VQSL), 318–338 (TLPC…LASY), 372–392 (VISF…FVVV), 413–433 (WEEI…WFNV), 442–462 (MFAY…LWYF), and 473–493 (AVPA…MMLL).

The protein belongs to the XK family.

Its subcellular location is the cell membrane. This Homo sapiens (Human) protein is XK-related protein 6.